A 252-amino-acid polypeptide reads, in one-letter code: Imidazole glycerol phosphate synthase subunit HisF (252 aa).

Residues aspartate 11 and aspartate 130 contribute to the active site.

This sequence belongs to the HisA/HisF family. In terms of assembly, heterodimer of HisH and HisF.

Its subcellular location is the cytoplasm. The catalysed reaction is 5-[(5-phospho-1-deoxy-D-ribulos-1-ylimino)methylamino]-1-(5-phospho-beta-D-ribosyl)imidazole-4-carboxamide + L-glutamine = D-erythro-1-(imidazol-4-yl)glycerol 3-phosphate + 5-amino-1-(5-phospho-beta-D-ribosyl)imidazole-4-carboxamide + L-glutamate + H(+). The protein operates within amino-acid biosynthesis; L-histidine biosynthesis; L-histidine from 5-phospho-alpha-D-ribose 1-diphosphate: step 5/9. In terms of biological role, IGPS catalyzes the conversion of PRFAR and glutamine to IGP, AICAR and glutamate. The HisF subunit catalyzes the cyclization activity that produces IGP and AICAR from PRFAR using the ammonia provided by the HisH subunit. This Bacillus thuringiensis (strain Al Hakam) protein is Imidazole glycerol phosphate synthase subunit HisF.